The chain runs to 157 residues: Large ribosomal subunit protein uL15 (157 aa).

A disordered region spans residues 1 to 64; the sequence is MKLNEIPAVP…MPLQRRLPKR (64 aa). Residues 21–31 show a composition bias toward gly residues; it reads RGPGSGNGKTA.

It belongs to the universal ribosomal protein uL15 family. In terms of assembly, part of the 50S ribosomal subunit.

Functionally, binds to the 23S rRNA. This is Large ribosomal subunit protein uL15 from Magnetococcus marinus (strain ATCC BAA-1437 / JCM 17883 / MC-1).